Consider the following 176-residue polypeptide: Isopentenyl-diphosphate Delta-isomerase (176 aa).

Positions 22 and 28 each coordinate Mn(2+). One can recognise a Nudix hydrolase domain in the interval 26 to 160; the sequence is LRHKAVSVFV…PDRYTPWLRI (135 aa). Cys-62 is a catalytic residue. His-64 is a binding site for Mn(2+). Glu-82 contacts Mg(2+). Glu-108 and Glu-110 together coordinate Mn(2+). Glu-110 is a catalytic residue.

This sequence belongs to the IPP isomerase type 1 family. Requires Mg(2+) as cofactor. Mn(2+) serves as cofactor.

Its subcellular location is the cytoplasm. The catalysed reaction is isopentenyl diphosphate = dimethylallyl diphosphate. The protein operates within isoprenoid biosynthesis; dimethylallyl diphosphate biosynthesis; dimethylallyl diphosphate from isopentenyl diphosphate: step 1/1. Its pathway is porphyrin-containing compound metabolism; chlorophyll biosynthesis. Its function is as follows. Catalyzes the 1,3-allylic rearrangement of the homoallylic substrate isopentenyl (IPP) to its highly electrophilic allylic isomer, dimethylallyl diphosphate (DMAPP). The polypeptide is Isopentenyl-diphosphate Delta-isomerase (Roseobacter denitrificans (strain ATCC 33942 / OCh 114) (Erythrobacter sp. (strain OCh 114))).